The chain runs to 295 residues: Ribosomal protein L11 methyltransferase (295 aa).

Thr138, Gly161, Asp183, and Asn230 together coordinate S-adenosyl-L-methionine.

This sequence belongs to the methyltransferase superfamily. PrmA family.

It localises to the cytoplasm. The catalysed reaction is L-lysyl-[protein] + 3 S-adenosyl-L-methionine = N(6),N(6),N(6)-trimethyl-L-lysyl-[protein] + 3 S-adenosyl-L-homocysteine + 3 H(+). In terms of biological role, methylates ribosomal protein L11. The polypeptide is Ribosomal protein L11 methyltransferase (Rhodopseudomonas palustris (strain BisB5)).